The chain runs to 124 residues: T cell receptor beta variable 13 (124 aa).

An N-terminal signal peptide occupies residues 1–31 (MLSPDLPDSAWNTRLLCRVMLCLLGAGSVAA). One can recognise an Ig-like domain in the interval 32 to 124 (GVIQSPRHLI…SALYFCASSL (93 aa)). An intrachain disulfide couples cysteine 52 to cysteine 120. N-linked (GlcNAc...) asparagine glycosylation occurs at asparagine 106.

As to quaternary structure, alpha-beta TR is a heterodimer composed of an alpha and beta chain; disulfide-linked. The alpha-beta TR is associated with the transmembrane signaling CD3 coreceptor proteins to form the TR-CD3 (TcR or TCR). The assembly of alpha-beta TR heterodimers with CD3 occurs in the endoplasmic reticulum where a single alpha-beta TR heterodimer associates with one CD3D-CD3E heterodimer, one CD3G-CD3E heterodimer and one CD247 homodimer forming a stable octameric structure. CD3D-CD3E and CD3G-CD3E heterodimers preferentially associate with TR alpha and TR beta chains, respectively. The association of the CD247 homodimer is the last step of TcR assembly in the endoplasmic reticulum and is required for transport to the cell surface.

It localises to the cell membrane. In terms of biological role, v region of the variable domain of T cell receptor (TR) beta chain that participates in the antigen recognition. Alpha-beta T cell receptors are antigen specific receptors which are essential to the immune response and are present on the cell surface of T lymphocytes. Recognize peptide-major histocompatibility (MH) (pMH) complexes that are displayed by antigen presenting cells (APC), a prerequisite for efficient T cell adaptive immunity against pathogens. Binding of alpha-beta TR to pMH complex initiates TR-CD3 clustering on the cell surface and intracellular activation of LCK that phosphorylates the ITAM motifs of CD3G, CD3D, CD3E and CD247 enabling the recruitment of ZAP70. In turn ZAP70 phosphorylates LAT, which recruits numerous signaling molecules to form the LAT signalosome. The LAT signalosome propagates signal branching to three major signaling pathways, the calcium, the mitogen-activated protein kinase (MAPK) kinase and the nuclear factor NF-kappa-B (NF-kB) pathways, leading to the mobilization of transcription factors that are critical for gene expression and essential for T cell growth and differentiation. The T cell repertoire is generated in the thymus, by V-(D)-J rearrangement. This repertoire is then shaped by intrathymic selection events to generate a peripheral T cell pool of self-MH restricted, non-autoaggressive T cells. Post-thymic interaction of alpha-beta TR with the pMH complexes shapes TR structural and functional avidity. The protein is T cell receptor beta variable 13 of Homo sapiens (Human).